Here is a 355-residue protein sequence, read N- to C-terminus: dTDP-D-glucose 4,6-dehydratase (355 aa).

Threonine 142 is a binding site for substrate. Catalysis depends on aspartate 143, which acts as the Proton donor. Catalysis depends on proton acceptor residues glutamate 144 and tyrosine 166.

It belongs to the NAD(P)-dependent epimerase/dehydratase family. dTDP-glucose dehydratase subfamily. It depends on NAD(+) as a cofactor.

The catalysed reaction is dTDP-alpha-D-glucose = dTDP-4-dehydro-6-deoxy-alpha-D-glucose + H2O. In Mus musculus (Mouse), this protein is dTDP-D-glucose 4,6-dehydratase (Tgds).